A 175-amino-acid chain; its full sequence is Beta-carotene hydroxylase (175 aa).

A Fatty acid hydroxylase domain is found at 11–136; that stretch reads FVTVIGMEVI…RGKEGCVSFG (126 aa).

It belongs to the sterol desaturase family.

The catalysed reaction is all-trans-beta-carotene + 4 reduced [2Fe-2S]-[ferredoxin] + 2 O2 + 4 H(+) = all-trans-zeaxanthin + 4 oxidized [2Fe-2S]-[ferredoxin] + 2 H2O. It participates in carotenoid biosynthesis; zeaxanthin biosynthesis. Functionally, catalyzes the hydroxylation reaction from beta-carotene to zeaxanthin. This Pantoea ananas (Erwinia uredovora) protein is Beta-carotene hydroxylase (crtZ).